An 800-amino-acid polypeptide reads, in one-letter code: Phenylalanine--tRNA ligase beta subunit (800 aa).

Residues 39 to 154 (TKDIKKLVVG…EAVKPGTDAL (116 aa)) form the tRNA-binding domain. A B5 domain is found at 408 to 483 (SFVTPIKITA…RIYGYDDIPS (76 aa)). The Mg(2+) site is built by Asp-461, Asp-467, Glu-470, and Glu-471. The FDX-ACB domain occupies 708–800 (PRFPGVTRDI…ALKKHGAIIR (93 aa)).

Belongs to the phenylalanyl-tRNA synthetase beta subunit family. Type 1 subfamily. As to quaternary structure, tetramer of two alpha and two beta subunits. Mg(2+) is required as a cofactor.

The protein resides in the cytoplasm. The catalysed reaction is tRNA(Phe) + L-phenylalanine + ATP = L-phenylalanyl-tRNA(Phe) + AMP + diphosphate + H(+). This chain is Phenylalanine--tRNA ligase beta subunit, found in Staphylococcus epidermidis (strain ATCC 35984 / DSM 28319 / BCRC 17069 / CCUG 31568 / BM 3577 / RP62A).